Reading from the N-terminus, the 2694-residue chain is Teneurin-3 (2694 aa).

Disordered regions lie at residues 1-45 (MDVK…SSSE), 106-132 (PSSL…DNQS), and 161-198 (TQPA…PSVT). The Teneurin N-terminal domain maps to 1-306 (MDVKERRPYC…KSSKYCSWRC (306 aa)). Topologically, residues 1 to 312 (MDVKERRPYC…SWRCTALSAM (312 aa)) are cytoplasmic. Over residues 163-184 (PAPSHSCNEQPSNQHQQGQSTL) the composition is skewed to polar residues. Residues 313-333 (AVSILLSVLLCYCIAMHLFGL) traverse the membrane as a helical segment. Topologically, residues 334–2694 (NWQLQETEGY…FLRQSEIGKR (2361 aa)) are extracellular. Asparagine 374 and asparagine 413 each carry an N-linked (GlcNAc...) asparagine glycan. EGF-like domains are found at residues 508–539 (TLTE…PDCS), 540–570 (RAAC…TECD), 572–604 (PSNQ…DNCE), 605–636 (EVDC…NNCE), 638–671 (LKTM…PDCS), 672–703 (IEVC…VCDL), 704–733 (KACH…EHCT), and 734–768 (VEGC…AGCD). Intrachain disulfides connect cysteine 512–cysteine 522, cysteine 516–cysteine 527, cysteine 529–cysteine 538, cysteine 547–cysteine 558, cysteine 560–cysteine 569, cysteine 576–cysteine 587, cysteine 581–cysteine 592, cysteine 594–cysteine 603, cysteine 608–cysteine 619, cysteine 613–cysteine 624, cysteine 626–cysteine 635, cysteine 646–cysteine 659, cysteine 661–cysteine 670, cysteine 675–cysteine 685, cysteine 679–cysteine 690, cysteine 692–cysteine 701, cysteine 706–cysteine 716, cysteine 710–cysteine 721, cysteine 723–cysteine 732, cysteine 737–cysteine 747, cysteine 741–cysteine 756, and cysteine 758–cysteine 767. Asparagine 664 is a glycosylation site (N-linked (GlcNAc...) asparagine). Asparagine 854, asparagine 877, and asparagine 1048 each carry an N-linked (GlcNAc...) asparagine glycan. 5 NHL repeats span residues 1166–1192 (LLAP…RRIF), 1194–1238 (SGNV…PKAL), 1264–1308 (ARCG…NGII), 1325–1365 (CDNS…ITEN), and 1452–1495 (CYQT…IRHN). An N-linked (GlcNAc...) asparagine glycan is attached at asparagine 1196. The YD 1 repeat unit spans residues 1505 to 1524 (FEVASPASQELYVFDSNGTH). Asparagine 1521 and asparagine 1538 each carry an N-linked (GlcNAc...) asparagine glycan. YD repeat units follow at residues 1541–1561 (YSNE…LRVR), 1604–1623 (YHGN…WTTF), and 1624–1646 (YDYD…TSLI). Residues asparagine 1634, asparagine 1671, asparagine 1729, and asparagine 1814 are each glycosylated (N-linked (GlcNAc...) asparagine). 18 YD repeats span residues 1817–1836 (YSST…ERVE), 1858–1876 (YLDK…YIFD), 1877–1897 (YDLQ…HTMQ), 1904–1921 (YYRN…VTVD), 1922–1943 (YSED…VLYK), 1944–1961 (YRRQ…TRVS), 1964–1984 (YDET…FICS), 1987–2007 (YRQI…DGMV), 2015–2034 (YDNS…TPLP), 2040–2057 (FDDI…GVIY), 2058–2084 (YDIN…IKEI), 2086–2099 (YEIF…ITIQ), 2100–2123 (YDNM…TKYG), 2126–2146 (YDVD…WRYN), 2147–2167 (YDLN…LTPL), 2169–2189 (YDLR…DEDG), 2201–2221 (YNSK…TIQY), and 2223–2243 (YDGL…LQFF). Asparagine 1915 carries N-linked (GlcNAc...) asparagine glycosylation. An N-linked (GlcNAc...) asparagine glycan is attached at asparagine 2118. Residue asparagine 2258 is glycosylated (N-linked (GlcNAc...) asparagine). One copy of the YD 23 repeat lies at 2269 to 2310 (YDLQGHLFAMEISSGEEFYIACDNTGTPLAVFSSNGLLLKQV). The N-linked (GlcNAc...) asparagine glycan is linked to asparagine 2571.

This sequence belongs to the tenascin family. Teneurin subfamily. As to quaternary structure, homodimer; disulfide-linked; to mediate homophilic cell adhesion. Expressed by retinal ganglion cells and their presynaptic amacrine and postsynaptic tectal cell targets.

Its subcellular location is the cell membrane. It is found in the cell projection. It localises to the axon. Functionally, involved in neural development by regulating the establishment of proper connectivity within the nervous system. Acts in both pre- and postsynaptic neurons in the hippocampus to control the assembly of a precise topographic projection: required in both CA1 and subicular neurons for the precise targeting of proximal CA1 axons to distal subiculum, probably by promoting homophilic cell adhesion. Required by retinal ganglion cells for acquisition of their correct morphological and functional connectivity, thereby playing a key role in the development of the visual pathway. The polypeptide is Teneurin-3 (tenm3) (Danio rerio (Zebrafish)).